The primary structure comprises 181 residues: Small acidic protein (181 aa).

The tract at residues 1–181 is disordered; sequence MSAARESHPH…KMMFVKSSGS (181 aa). Residue K13 forms a Glycyl lysine isopeptide (Lys-Gly) (interchain with G-Cter in SUMO2) linkage. S15 and S17 each carry phosphoserine. Basic and acidic residues predominate over residues 48-78; sequence GKKEHTGRLVIGDHKSTSHFRTGEEDKKINE. K62 participates in a covalent cross-link: Glycyl lysine isopeptide (Lys-Gly) (interchain with G-Cter in SUMO2). S63 bears the Phosphoserine mark. K75 participates in a covalent cross-link: Glycyl lysine isopeptide (Lys-Gly) (interchain with G-Cter in SUMO2). A phosphoserine mark is found at S87, S125, and S145. Residues 106–147 show a composition bias toward acidic residues; sequence EVDDHDGEGDVAGDDDDDDSPDPESPDDSESDSESEKEESTE. Residues 151 to 169 are compositionally biased toward basic and acidic residues; that stretch reads AAEHPDEVEDSKNKKDAKS. N6-acetyllysine is present on residues K172 and K177.

The protein belongs to the SMAP family.

This Bos taurus (Bovine) protein is Small acidic protein (SMAP).